A 1218-amino-acid chain; its full sequence is Probable cation-transporting ATPase 13A5 (1218 aa).

The next 4 membrane-spanning stretches (helical) occupy residues 33-53 (KAFC…VFYW), 222-242 (GYIE…VLSV), 401-421 (FIVF…GVYM), and 433-453 (MALI…LTIG). Aspartate 486 acts as the 4-aspartylphosphate intermediate in catalysis. Residues asparagine 540, asparagine 669, and asparagine 819 are each glycosylated (N-linked (GlcNAc...) asparagine). Aspartate 850 and aspartate 854 together coordinate Mg(2+). 6 helical membrane passes run 903 to 923 (FGVF…ALLL), 940 to 956 (VAIT…THAY), 973 to 993 (LLLS…SAFL), 1042 to 1062 (FETT…AFIF), 1077 to 1097 (IFSF…FSDF), and 1115 to 1135 (VLIL…EDSI).

Belongs to the cation transport ATPase (P-type) (TC 3.A.3) family. Type V subfamily.

It is found in the membrane. The catalysed reaction is ATP + H2O = ADP + phosphate + H(+). In Homo sapiens (Human), this protein is Probable cation-transporting ATPase 13A5 (ATP13A5).